Reading from the N-terminus, the 141-residue chain is Large ribosomal subunit protein uL11 (141 aa).

It belongs to the universal ribosomal protein uL11 family. As to quaternary structure, part of the ribosomal stalk of the 50S ribosomal subunit. Interacts with L10 and the large rRNA to form the base of the stalk. L10 forms an elongated spine to which L12 dimers bind in a sequential fashion forming a multimeric L10(L12)X complex. One or more lysine residues are methylated.

Functionally, forms part of the ribosomal stalk which helps the ribosome interact with GTP-bound translation factors. In Alkaliphilus oremlandii (strain OhILAs) (Clostridium oremlandii (strain OhILAs)), this protein is Large ribosomal subunit protein uL11.